The following is a 373-amino-acid chain: 5-amino-6-(5-phospho-D-ribitylamino)uracil phosphatase, chloroplastic (373 aa).

It belongs to the HAD-like hydrolase superfamily. DOG/GPP family. As to quaternary structure, homodimer. The cofactor is Mg(2+).

It localises to the plastid. It is found in the chloroplast. It catalyses the reaction 5-amino-6-(5-phospho-D-ribitylamino)uracil + H2O = 5-amino-6-(D-ribitylamino)uracil + phosphate. In terms of biological role, catalyzes the dephosphorylation of 5-amino-6-(5-phospho-D-ribitylamino)uracil, also known as ARPP, but has no activity toward flavin mononucleotide (FMN). This chain is 5-amino-6-(5-phospho-D-ribitylamino)uracil phosphatase, chloroplastic, found in Arabidopsis thaliana (Mouse-ear cress).